Reading from the N-terminus, the 700-residue chain is Elongation factor G (700 aa).

Positions 10–286 (KKVRNIGIMA…AVIDYLPSPL (277 aa)) constitute a tr-type G domain. Residues 19–26 (AHIDAGKT), 83–87 (DTPGH), and 137–140 (NKMD) each bind GTP.

It belongs to the TRAFAC class translation factor GTPase superfamily. Classic translation factor GTPase family. EF-G/EF-2 subfamily.

It is found in the cytoplasm. Its function is as follows. Catalyzes the GTP-dependent ribosomal translocation step during translation elongation. During this step, the ribosome changes from the pre-translocational (PRE) to the post-translocational (POST) state as the newly formed A-site-bound peptidyl-tRNA and P-site-bound deacylated tRNA move to the P and E sites, respectively. Catalyzes the coordinated movement of the two tRNA molecules, the mRNA and conformational changes in the ribosome. This is Elongation factor G from Nocardia farcinica (strain IFM 10152).